Here is a 426-residue protein sequence, read N- to C-terminus: Nucleolar protein 12 (426 aa).

A disordered region spans residues Q26–K128. Positions L87 to E105 are enriched in basic and acidic residues. RRM domains lie at R137–H251 and R259–N339. Residues K401 to A415 show a composition bias toward basic residues. Residues K401–K426 form a disordered region. Positions K417–K426 are enriched in basic and acidic residues.

Belongs to the RRM RBM34 family.

Its subcellular location is the nucleus. The protein localises to the nucleolus. Its function is as follows. Involved in pre-25S rRNA processing. This Eremothecium gossypii (strain ATCC 10895 / CBS 109.51 / FGSC 9923 / NRRL Y-1056) (Yeast) protein is Nucleolar protein 12 (NOP12).